Here is a 505-residue protein sequence, read N- to C-terminus: Aminoaldehyde dehydrogenase 2 (505 aa).

Na(+)-binding residues include Ile31 and Asp99. NAD(+) is bound by residues 159–161 and 185–188; these read TPW and KPSE. Leu189 lines the Na(+) pocket. 238 to 242 is an NAD(+) binding site; that stretch reads GSGPT. The Proton acceptor role is filled by Glu260. NAD(+) is bound at residue Leu261. The active-site Nucleophile is the Cys295. Glu394 and Trp460 together coordinate NAD(+).

The protein belongs to the aldehyde dehydrogenase family. As to quaternary structure, forms homodimers.

It catalyses the reaction 4-aminobutanal + NAD(+) + H2O = 4-aminobutanoate + NADH + 2 H(+). The enzyme catalyses 3-aminopropanal + NAD(+) + H2O = beta-alanine + NADH + 2 H(+). The catalysed reaction is 4-(trimethylamino)butanal + NAD(+) + H2O = 4-(trimethylamino)butanoate + NADH + 2 H(+). It carries out the reaction 4-guanidinobutanal + NAD(+) + H2O = 4-guanidinobutanoate + NADH + 2 H(+). It functions in the pathway amine and polyamine biosynthesis; betaine biosynthesis via choline pathway; betaine from betaine aldehyde: step 1/1. In terms of biological role, dehydrogenase that catalyzes the oxidation of several aminoaldehydes. Metabolizes and detoxifies aldehyde products of polyamine degradation to non-toxic amino acids. Catalyzes the oxidation of 4-aminobutanal and 3-aminopropanal to 4-aminobutanoate and beta-alanine, respectively. Catalyzes the oxidation of 4-(trimethylamino)butanal and 4-guanidinobutanal to 4-trimethylammoniobutanoate and 4-guanidinobutanoate, respectively. This Solanum lycopersicum (Tomato) protein is Aminoaldehyde dehydrogenase 2.